The primary structure comprises 394 residues: 1-deoxy-D-xylulose 5-phosphate reductoisomerase (394 aa).

7 residues coordinate NADPH: threonine 12, glycine 13, serine 14, isoleucine 15, lysine 39, glutamine 40, and asparagine 126. Lysine 127 provides a ligand contact to 1-deoxy-D-xylulose 5-phosphate. Glutamate 128 is an NADPH binding site. Aspartate 152 serves as a coordination point for Mn(2+). Serine 153, glutamate 154, serine 183, and histidine 206 together coordinate 1-deoxy-D-xylulose 5-phosphate. A Mn(2+)-binding site is contributed by glutamate 154. Glycine 212 contributes to the NADPH binding site. Serine 219, asparagine 224, lysine 225, and glutamate 228 together coordinate 1-deoxy-D-xylulose 5-phosphate. Glutamate 228 serves as a coordination point for Mn(2+).

This sequence belongs to the DXR family. Mg(2+) is required as a cofactor. The cofactor is Mn(2+).

The enzyme catalyses 2-C-methyl-D-erythritol 4-phosphate + NADP(+) = 1-deoxy-D-xylulose 5-phosphate + NADPH + H(+). The protein operates within isoprenoid biosynthesis; isopentenyl diphosphate biosynthesis via DXP pathway; isopentenyl diphosphate from 1-deoxy-D-xylulose 5-phosphate: step 1/6. Functionally, catalyzes the NADPH-dependent rearrangement and reduction of 1-deoxy-D-xylulose-5-phosphate (DXP) to 2-C-methyl-D-erythritol 4-phosphate (MEP). The protein is 1-deoxy-D-xylulose 5-phosphate reductoisomerase of Neisseria gonorrhoeae (strain ATCC 700825 / FA 1090).